A 20-amino-acid chain; its full sequence is Brevinin-1DYc (20 aa).

Cysteine 14 and cysteine 20 are disulfide-bonded.

Expressed by the skin glands.

It localises to the secreted. In terms of biological role, antimicrobial peptide. Has low activity against the Gram-positive bacterium S.aureus and the Gram-negative bacterium E.coli (MIC&lt;15 uM). Has a strong hemolytic activity. This is Brevinin-1DYc from Rana dybowskii (Dybovsky's frog).